The following is a 291-amino-acid chain: 4-hydroxy-tetrahydrodipicolinate synthase (291 aa).

Thr-44 is a binding site for pyruvate. The active-site Proton donor/acceptor is the Tyr-132. The active-site Schiff-base intermediate with substrate is Lys-160. Val-202 contributes to the pyruvate binding site.

The protein belongs to the DapA family. In terms of assembly, homotetramer; dimer of dimers.

The protein localises to the cytoplasm. The catalysed reaction is L-aspartate 4-semialdehyde + pyruvate = (2S,4S)-4-hydroxy-2,3,4,5-tetrahydrodipicolinate + H2O + H(+). It functions in the pathway amino-acid biosynthesis; L-lysine biosynthesis via DAP pathway; (S)-tetrahydrodipicolinate from L-aspartate: step 3/4. Catalyzes the condensation of (S)-aspartate-beta-semialdehyde [(S)-ASA] and pyruvate to 4-hydroxy-tetrahydrodipicolinate (HTPA). In Clostridium perfringens (strain SM101 / Type A), this protein is 4-hydroxy-tetrahydrodipicolinate synthase.